Consider the following 663-residue polypeptide: Ankyrin repeat and SAM domain-containing protein 3 (663 aa).

An interaction with NEK7 region spans residues 1 to 421 (MSELSDEASE…PGSEPQAEKS (421 aa)). A phosphoserine mark is found at Ser-2 and Ser-5. ANK repeat units follow at residues 34–64 (DVPLDLHTAASIGQYEVVKECVQRRELDLNK), 68–97 (GGWTPLMYASYIGHDTIVHLLLEAGVSVNV), 101–130 (EGQTPLMLASSCGNESIAYFLLQQGAELEM), 134–163 (QGWTALFHCTSAGHQQMVKFLLESGANANV), 168–197 (YGFTPLMEAAAAGHEIIVQYFLNHGVKVDT), and 201–220 (SGATARMLAKQYGHMKIVAL). Asn-96 bears the 3-hydroxyasparagine mark. Phosphoserine is present on residues Ser-201, Ser-225, Ser-243, Ser-244, and Ser-245. Disordered stretches follow at residues 242–261 (LSSSDESWPVPQRQRPCRKK) and 278–425 (TGLG…PYSG). Thr-318 is modified (phosphothreonine). At Ser-319 the chain carries Phosphoserine. The segment covering 322–337 (NERDVESSSSSSREEP) has biased composition (basic and acidic residues). 3 positions are modified to phosphoserine: Ser-366, Ser-369, and Ser-373. The span at 378–395 (KSSVRKQTRTYLKNKSRH) shows a compositional bias: basic residues. Positions 424 to 487 (SGPQDLATLL…TSAIARWHSS (64 aa)) constitute an SAM domain. A coiled-coil region spans residues 500–575 (ADRLEAEMQE…AALVLDQLRA (76 aa)). Ser-540 carries the phosphoserine modification. Disordered stretches follow at residues 585–604 (KQHHSPSEATQNPPFLPADS) and 637–663 (AEPGETTDAEWEEMEGTIARRDDSDVG). Residues 641–651 (ETTDAEWEEME) show a composition bias toward acidic residues. A compositionally biased stretch (basic and acidic residues) spans 654–663 (IARRDDSDVG).

Homooligomer. Interacts (via SAM domain) with ANKS6 (via SAM domain). Interacts with BICC1. Interacts with NPHP1. Interacts with NEK8. Interacts with HIF1AN. Interacts with NEK7; this interaction alters the subcellular distribution of NEK7 by preventing its nuclear translocation. Post-translationally, hydroxylated at Asn-96, most probably by HIF1AN. Phosphorylations at Ser-5, Ser-225, Thr-318, Ser-319, Ser-366 and Ser-369 occur in a NEK7-dependent manner. In terms of processing, polyubiquitinated.

It is found in the cell projection. The protein resides in the cilium. Its subcellular location is the cytoplasm. May be involved in vasopressin signaling in the kidney. The protein is Ankyrin repeat and SAM domain-containing protein 3 (Anks3) of Rattus norvegicus (Rat).